The chain runs to 393 residues: Zinc finger CCCH domain-containing protein 2 (393 aa).

The disordered stretch occupies residues 1–71; the sequence is MDVVCTEHQM…NRENKEYCYD (71 aa). Low complexity predominate over residues 20-37; sequence RKLLLSSKSFPSDSSSPR. The segment covering 60–69 has biased composition (basic and acidic residues); the sequence is DNNRENKEYC. C3H1-type zinc fingers lie at residues 122 to 150 and 159 to 181; these read QYSG…HGVF and YRTE…AHSP.

Interacts with MARD1/FLZ9 and RD21A. Specifically expressed in seeds.

The protein resides in the nucleus. Probable transcription repressor that functions as a negative regulator of phytochrome-mediated promotion of seed germination. Inhibits seed germination by regulating the expression of gibberellic acid (GA) and abscisic acid (ABA) metabolic genes. Does not regulate the expression of the DELLA genes RGA and RGA1. Activated by PIL5, a phytochrome-interacting basic helix-loop-helix transcription factor. Represses directly JMJ20 and JMJ22 expression in the absence of red light (R) and in far-red (FR) conditions. This chain is Zinc finger CCCH domain-containing protein 2, found in Arabidopsis thaliana (Mouse-ear cress).